Consider the following 240-residue polypeptide: UDP-2,3-diacylglucosamine hydrolase (240 aa).

Mn(2+) is bound by residues D8, H10, D41, N79, and H114. Residue 79 to 80 (NR) participates in substrate binding. Substrate contacts are provided by D122, S160, N164, K167, and H195. Residues H195 and H197 each coordinate Mn(2+).

The protein belongs to the LpxH family. Mn(2+) is required as a cofactor.

Its subcellular location is the cell inner membrane. It carries out the reaction UDP-2-N,3-O-bis[(3R)-3-hydroxytetradecanoyl]-alpha-D-glucosamine + H2O = 2-N,3-O-bis[(3R)-3-hydroxytetradecanoyl]-alpha-D-glucosaminyl 1-phosphate + UMP + 2 H(+). Its pathway is glycolipid biosynthesis; lipid IV(A) biosynthesis; lipid IV(A) from (3R)-3-hydroxytetradecanoyl-[acyl-carrier-protein] and UDP-N-acetyl-alpha-D-glucosamine: step 4/6. Hydrolyzes the pyrophosphate bond of UDP-2,3-diacylglucosamine to yield 2,3-diacylglucosamine 1-phosphate (lipid X) and UMP by catalyzing the attack of water at the alpha-P atom. Involved in the biosynthesis of lipid A, a phosphorylated glycolipid that anchors the lipopolysaccharide to the outer membrane of the cell. This chain is UDP-2,3-diacylglucosamine hydrolase, found in Escherichia coli O81 (strain ED1a).